The sequence spans 124 residues: Small ribosomal subunit protein bS6 (124 aa).

The protein belongs to the bacterial ribosomal protein bS6 family.

In terms of biological role, binds together with bS18 to 16S ribosomal RNA. This Actinobacillus pleuropneumoniae serotype 5b (strain L20) protein is Small ribosomal subunit protein bS6.